The chain runs to 140 residues: 3-hydroxyacyl-[acyl-carrier-protein] dehydratase FabZ (140 aa).

Residue His-47 is part of the active site.

Belongs to the thioester dehydratase family. FabZ subfamily.

It localises to the cytoplasm. It catalyses the reaction a (3R)-hydroxyacyl-[ACP] = a (2E)-enoyl-[ACP] + H2O. Involved in unsaturated fatty acids biosynthesis. Catalyzes the dehydration of short chain beta-hydroxyacyl-ACPs and long chain saturated and unsaturated beta-hydroxyacyl-ACPs. The protein is 3-hydroxyacyl-[acyl-carrier-protein] dehydratase FabZ of Streptococcus agalactiae serotype III (strain NEM316).